The primary structure comprises 234 residues: Large ribosomal subunit protein uL1 (234 aa).

This sequence belongs to the universal ribosomal protein uL1 family. As to quaternary structure, part of the 50S ribosomal subunit.

Its function is as follows. Binds directly to 23S rRNA. The L1 stalk is quite mobile in the ribosome, and is involved in E site tRNA release. Functionally, protein L1 is also a translational repressor protein, it controls the translation of the L11 operon by binding to its mRNA. This is Large ribosomal subunit protein uL1 from Salmonella gallinarum (strain 287/91 / NCTC 13346).